A 106-amino-acid polypeptide reads, in one-letter code: Small membrane A-kinase anchor protein (106 aa).

Residue Gly2 is the site of N-myristoyl glycine attachment. Residue Cys3 is the site of S-palmitoyl cysteine attachment. Ser40 bears the Phosphoserine mark. Positions 62–85 (ALILEFADRLASEIVEDALQQWAC) are PKA-RI-binding. Phosphoserine is present on Ser98.

It belongs to the small membrane AKAP family. Interacts with PKA type I regulatory subunits PRKAR1A and PRKAR1B. Also binds to type II regulatory subunits, but at a tenfold lower affinity. May be palmitoylated at Cys-3. In terms of tissue distribution, widely expressed, with very low levels in spleen and liver.

Its subcellular location is the cell membrane. In terms of biological role, binds to type I regulatory subunits of protein kinase A (PKA-RI) and may anchor/target them to the plasma membrane. This is Small membrane A-kinase anchor protein from Mus musculus (Mouse).